The chain runs to 304 residues: Putative S-adenosyl-L-methionine-dependent methyltransferase Mmcs_1043 (304 aa).

S-adenosyl-L-methionine is bound by residues Asp-130 and 159 to 160 (DL).

The protein belongs to the UPF0677 family.

In terms of biological role, exhibits S-adenosyl-L-methionine-dependent methyltransferase activity. This Mycobacterium sp. (strain MCS) protein is Putative S-adenosyl-L-methionine-dependent methyltransferase Mmcs_1043.